A 663-amino-acid chain; its full sequence is Bifunctional polymyxin resistance protein ArnA (663 aa).

Residues 1–307 (MSPKAVVFAY…EFGLVEGSQL (307 aa)) form a formyltransferase ArnAFT region. His106 serves as the catalytic Proton donor; for formyltransferase activity. Residues Arg116 and 138-142 (VKRAD) contribute to the (6R)-10-formyltetrahydrofolate site. Residues 317–663 (RRTRVLILGV…EAMAEKADMR (347 aa)) form a dehydrogenase ArnADH region. NAD(+)-binding positions include Asp350 and 371–372 (DI). Residues Ala396, Tyr401, and 435 to 436 (TS) each bind UDP-alpha-D-glucuronate. Glu437 serves as the catalytic Proton acceptor; for decarboxylase activity. Residues Arg463, Asn494, 528–537 (RLVDGGAQKR), and Tyr615 each bind UDP-alpha-D-glucuronate. Arg621 serves as the catalytic Proton donor; for decarboxylase activity.

It in the N-terminal section; belongs to the Fmt family. UDP-L-Ara4N formyltransferase subfamily. The protein in the C-terminal section; belongs to the NAD(P)-dependent epimerase/dehydratase family. UDP-glucuronic acid decarboxylase subfamily. As to quaternary structure, homohexamer, formed by a dimer of trimers.

It catalyses the reaction UDP-alpha-D-glucuronate + NAD(+) = UDP-beta-L-threo-pentopyranos-4-ulose + CO2 + NADH. The catalysed reaction is UDP-4-amino-4-deoxy-beta-L-arabinose + (6R)-10-formyltetrahydrofolate = UDP-4-deoxy-4-formamido-beta-L-arabinose + (6S)-5,6,7,8-tetrahydrofolate + H(+). It functions in the pathway nucleotide-sugar biosynthesis; UDP-4-deoxy-4-formamido-beta-L-arabinose biosynthesis; UDP-4-deoxy-4-formamido-beta-L-arabinose from UDP-alpha-D-glucuronate: step 1/3. Its pathway is nucleotide-sugar biosynthesis; UDP-4-deoxy-4-formamido-beta-L-arabinose biosynthesis; UDP-4-deoxy-4-formamido-beta-L-arabinose from UDP-alpha-D-glucuronate: step 3/3. It participates in bacterial outer membrane biogenesis; lipopolysaccharide biosynthesis. In terms of biological role, bifunctional enzyme that catalyzes the oxidative decarboxylation of UDP-glucuronic acid (UDP-GlcUA) to UDP-4-keto-arabinose (UDP-Ara4O) and the addition of a formyl group to UDP-4-amino-4-deoxy-L-arabinose (UDP-L-Ara4N) to form UDP-L-4-formamido-arabinose (UDP-L-Ara4FN). The modified arabinose is attached to lipid A and is required for resistance to polymyxin and cationic antimicrobial peptides. The polypeptide is Bifunctional polymyxin resistance protein ArnA (Pseudomonas savastanoi pv. phaseolicola (strain 1448A / Race 6) (Pseudomonas syringae pv. phaseolicola (strain 1448A / Race 6))).